A 165-amino-acid chain; its full sequence is Protein SprT (165 aa).

The 144-residue stretch at 20-163 folds into the SprT-like domain; sequence EKLAQANLKL…RCVHCGEQLV (144 aa). His78 serves as a coordination point for Zn(2+). Residue Glu79 is part of the active site. A Zn(2+)-binding site is contributed by His82.

Belongs to the SprT family. The cofactor is Zn(2+).

It is found in the cytoplasm. The polypeptide is Protein SprT (Escherichia coli O127:H6 (strain E2348/69 / EPEC)).